Consider the following 129-residue polypeptide: Small ribosomal subunit protein uS11 (129 aa).

This sequence belongs to the universal ribosomal protein uS11 family. In terms of assembly, part of the 30S ribosomal subunit. Interacts with proteins S7 and S18. Binds to IF-3.

In terms of biological role, located on the platform of the 30S subunit, it bridges several disparate RNA helices of the 16S rRNA. Forms part of the Shine-Dalgarno cleft in the 70S ribosome. The protein is Small ribosomal subunit protein uS11 of Phocaeicola vulgatus (strain ATCC 8482 / DSM 1447 / JCM 5826 / CCUG 4940 / NBRC 14291 / NCTC 11154) (Bacteroides vulgatus).